Consider the following 143-residue polypeptide: Potassium voltage-gated channel subfamily E regulatory beta subunit 5 (143 aa).

Residues Asn2 and Asn25 are each glycosylated (N-linked (GlcNAc...) asparagine). The chain crosses the membrane as a helical span at residues 61–81; the sequence is LYILLIMIFYACLAGGLILAY. At 82–143 the chain is on the cytoplasmic side; that stretch reads TRSRKLVEAK…PALAQGAERV (62 aa).

This sequence belongs to the potassium channel KCNE family. In terms of assembly, interacts with KCNQ1; impairs KCNQ1 localization in lipid rafts and only conducts current upon strong and continued depolarization. In terms of tissue distribution, detected in embryonal dorsal root and nerve ganglia, in the somites and in myoepicardial layer of the developing heart wall. Detected at lower levels in the central nervous system (CNS) and in developing limb.

It localises to the membrane. Its function is as follows. Potassium channel ancillary subunit that is essential for generation of some native K(+) currents by virtue of formation of heteromeric ion channel complex with voltage-gated potassium (Kv) channel pore-forming alpha subunits. Functions as an inhibitory beta-subunit of the repolarizing cardiac potassium ion channel KCNQ1. This Mus musculus (Mouse) protein is Potassium voltage-gated channel subfamily E regulatory beta subunit 5 (Kcne5).